The following is a 270-amino-acid chain: NAD(P)H-hydrate epimerase (270 aa).

The YjeF N-terminal domain occupies 25–234 (FQQLMDLMQN…DLLAPEAIYQ (210 aa)). A (6S)-NADPHX-binding site is contributed by 73–77 (DNGGQ). K(+) is bound by residues Asn-74 and Asp-144. (6S)-NADPHX contacts are provided by residues 148–154 (GVGLYGH) and Glu-177. K(+) is bound at residue Thr-180.

This sequence belongs to the NnrE/AIBP family. The cofactor is K(+).

The catalysed reaction is (6R)-NADHX = (6S)-NADHX. It catalyses the reaction (6R)-NADPHX = (6S)-NADPHX. Its function is as follows. Catalyzes the epimerization of the S- and R-forms of NAD(P)HX, a damaged form of NAD(P)H that is a result of enzymatic or heat-dependent hydration. This is a prerequisite for the S-specific NAD(P)H-hydrate dehydratase to allow the repair of both epimers of NAD(P)HX. This Legionella pneumophila (strain Corby) protein is NAD(P)H-hydrate epimerase.